We begin with the raw amino-acid sequence, 294 residues long: 4-hydroxy-tetrahydrodipicolinate synthase (294 aa).

Pyruvate is bound at residue T47. The active-site Proton donor/acceptor is the Y136. K164 functions as the Schiff-base intermediate with substrate in the catalytic mechanism. Residue V206 participates in pyruvate binding.

This sequence belongs to the DapA family. As to quaternary structure, homotetramer; dimer of dimers.

It localises to the cytoplasm. The enzyme catalyses L-aspartate 4-semialdehyde + pyruvate = (2S,4S)-4-hydroxy-2,3,4,5-tetrahydrodipicolinate + H2O + H(+). It participates in amino-acid biosynthesis; L-lysine biosynthesis via DAP pathway; (S)-tetrahydrodipicolinate from L-aspartate: step 3/4. In terms of biological role, catalyzes the condensation of (S)-aspartate-beta-semialdehyde [(S)-ASA] and pyruvate to 4-hydroxy-tetrahydrodipicolinate (HTPA). This Acaryochloris marina (strain MBIC 11017) protein is 4-hydroxy-tetrahydrodipicolinate synthase.